The chain runs to 97 residues: RxLR effector protein CRE10 (97 aa).

Residues 1–21 (MRLSYILVVVIAVTLQACVCA) form the signal peptide. A RxLR-dEER motif is present at residues 48–66 (RLLRGVKKRTAEREVQEER).

This sequence belongs to the RxLR effector family.

It localises to the secreted. The protein resides in the host cell. Functionally, effector that is involved in host plant infection. Contributes to virulence during the early infection stage, by inhibiting plant defense responses induced by both PAMP-triggered immunity (PTI) and effector-triggered immunity (ETI). This chain is RxLR effector protein CRE10, found in Phytophthora infestans (strain T30-4) (Potato late blight agent).